The primary structure comprises 298 residues: Mitochondrial substrate carrier family protein N (298 aa).

Over 1–13 (MAGDLTPSLFLKY) the chain is Mitochondrial intermembrane. Solcar repeat units follow at residues 8–92 (SLFL…FKKT), 104–188 (FRIP…TAEN), and 207–290 (QKLS…IKQM). A helical membrane pass occupies residues 14 to 34 (GFGGALSCSITHSLVVPLDVV). Residues 35-60 (KTLLQTNPGKYTGMMNGFSTVIKEQG) are Mitochondrial matrix-facing. Residues 61–81 (PSGLLQGLGPTAVGYALQGFL) traverse the membrane as a helical segment. The Mitochondrial intermembrane segment spans residues 82–105 (KFGFYEVFKKTYADAVGEKADQFR). Residues 106–126 (IPIWLAASATAEVIADIALCP) form a helical membrane-spanning segment. Topologically, residues 127 to 162 (NEAVRIRLVAEPTFAKSPVEAFGKIFKQEGVLGFYK) are mitochondrial matrix. A helical membrane pass occupies residues 163-179 (GLPPILLKQVPYTMAKF). Residues 180 to 208 (AVFEFTAENVYKGLAASGKPKESLTDGQK) lie on the Mitochondrial intermembrane side of the membrane. The helical transmembrane segment at 209–229 (LSVSLGSGIVAGIVAAIVSQP) threads the bilayer. At 230–262 (ADTILSKINQEKTDGGVVKAIGNIMRRLGVRGL) the chain is on the mitochondrial matrix side. A helical transmembrane segment spans residues 263–283 (FLGLPTRCFMVGTLTAGQFFI). Residues 284-298 (YDGIKQMLGLTPAKK) lie on the Mitochondrial intermembrane side of the membrane.

Belongs to the mitochondrial carrier (TC 2.A.29) family.

The protein localises to the mitochondrion inner membrane. In terms of biological role, mitochondrial solute carriers shuttle metabolites, nucleotides, and cofactors through the mitochondrial inner membrane. Transports phosphate groups from the cytosol to the mitochondrial matrix. Phosphate is cotransported with H(+). In Dictyostelium discoideum (Social amoeba), this protein is Mitochondrial substrate carrier family protein N (mcfN).